Consider the following 885-residue polypeptide: Alanine--tRNA ligase (885 aa).

Residues H574, H578, C685, and H689 each coordinate Zn(2+).

Belongs to the class-II aminoacyl-tRNA synthetase family. Zn(2+) is required as a cofactor.

It is found in the cytoplasm. The catalysed reaction is tRNA(Ala) + L-alanine + ATP = L-alanyl-tRNA(Ala) + AMP + diphosphate. Catalyzes the attachment of alanine to tRNA(Ala) in a two-step reaction: alanine is first activated by ATP to form Ala-AMP and then transferred to the acceptor end of tRNA(Ala). Also edits incorrectly charged Ser-tRNA(Ala) and Gly-tRNA(Ala) via its editing domain. This chain is Alanine--tRNA ligase, found in Deinococcus geothermalis (strain DSM 11300 / CIP 105573 / AG-3a).